We begin with the raw amino-acid sequence, 515 residues long: MAPATEAAPARTYDDEAAYVTVDDAHRVRVARGFVPNMRVDGVVYVNAALRALVLEELAAYCDATAHRGGGYSPALKQIANVAALPGVVGASIALPDVHSGYGFAIGNVAAFDVGDETSIVSPGGVGFDINCGVRLLRTNLTEAEVGPVKEALAQSLFDHIPVGVGSRGIIPTTPAALEAVLEMGMDWSLREGYAWAEDKEHTEEYGRMLNADPSKVSARAKKRGLPQMGTLGAGNHYAEIQVVDEIYDEFAAKKMGIDRVGQVCIMIHSGSRGLGHQVATDSLTAMERAMERDGIEVNDRQLACARISSQEGQDYLAAMACAANYAWVNRSSMTFLCRQAFAKMFGKPPDELDMHVVYDVSHNIAKFEEHMVDGEMKTLLVHRKGSTRAFPPHHPLIPVDYQYTGQPVLIGGTMGTCSYILTGTEKGMRDTFGSTCHGAGRARSRNKSRHVLQYEDVLEKLKTKGIAIRVASPKLVMEEAPESYKDVTEVVNTCHDAGISKKCVKLRPIAVVKG.

Mn(2+) contacts are provided by aspartate 129, cysteine 132, histidine 237, histidine 269, and histidine 363. 236–240 (NHYAE) contributes to the GMP binding site. GMP-binding positions include 363–364 (HN), 412–415 (GGTM), serine 419, 438–441 (HGAG), and lysine 514. Histidine 438 (GMP-histidine intermediate) is an active-site residue.

Belongs to the RtcB family. In terms of assembly, catalytic component of the tRNA-splicing ligase complex. Mn(2+) serves as cofactor.

It catalyses the reaction a 3'-end 3'-phospho-ribonucleotide-RNA + a 5'-end dephospho-ribonucleoside-RNA + GTP = a ribonucleotidyl-ribonucleotide-RNA + GMP + diphosphate. It carries out the reaction a 3'-end 2',3'-cyclophospho-ribonucleotide-RNA + a 5'-end dephospho-ribonucleoside-RNA + GTP + H2O = a ribonucleotidyl-ribonucleotide-RNA + GMP + diphosphate + H(+). Its function is as follows. Catalytic subunit of the tRNA-splicing ligase complex that acts by directly joining spliced tRNA halves to mature-sized tRNAs by incorporating the precursor-derived splice junction phosphate into the mature tRNA as a canonical 3',5'-phosphodiester. May act as an RNA ligase with broad substrate specificity, and may function toward other RNAs. This chain is RNA-splicing ligase RtcB homolog, found in Ostreococcus tauri.